The sequence spans 1193 residues: Tubulin monoglutamylase TTLL4 (1193 aa).

Disordered stretches follow at residues 1 to 37 (MASAGTEHYSIGLRRGNSFKQRHPSGTVSASPSEKPS) and 468 to 535 (VHLD…CSSL). Positions 24–34 (PSGTVSASPSE) are enriched in polar residues. The segment covering 472–482 (QPGKEPEEAKD) has biased composition (basic and acidic residues). A compositionally biased stretch (acidic residues) spans 502–515 (EPEDTEDELGDGLE). In terms of domain architecture, TTL spans 599–942 (RRLLRWKMST…VLPNMEDIIS (344 aa)). S686 is subject to Phosphoserine. ATP is bound by residues K716, 722-723 (RG), 744-747 (QRYL), and 757-759 (KFD). R722 contributes to the a protein binding site. R783 contacts L-glutamate. An ATP-binding site is contributed by 804–805 (TN). Y806, S807, and K828 together coordinate L-glutamate. Mg(2+) contacts are provided by D888, E901, and N903. The segment at 913 to 1027 (PLDISIKGQM…RGQFERIFPS (115 aa)) is c-MTBD region. An L-glutamate-binding site is contributed by K919. The span at 943–960 (SSSSPSSSSGSSTSLPSS) shows a compositional bias: low complexity. 2 disordered regions span residues 943–966 (SSSSPSSSSGSSTSLPSSPRDKCQ) and 1092–1193 (MTTS…AVSS). Polar residues-rich tracts occupy residues 1092–1102 (MTTSKGDGTPN) and 1131–1153 (SQAGLSPISRKTLSSRSNENTSK). Residues 1168–1182 (SGQSSRLSAASASQS) show a composition bias toward low complexity. Over residues 1183-1193 (VTDSRLTAVSS) the composition is skewed to polar residues.

Belongs to the tubulin--tyrosine ligase family. Requires Mg(2+) as cofactor. As to expression, highly expressed in testis. Expressed in brain, heart, kidney, liver, lung, muscle and spleen. In the brain, expressed in ependymal cilia, the cortex and the striatum. Expressed in blastomere.

The protein localises to the cytoplasm. It localises to the cell projection. The protein resides in the cilium. Its subcellular location is the cytoskeleton. It is found in the cilium basal body. The catalysed reaction is L-glutamyl-[protein] + L-glutamate + ATP = gamma-L-glutamyl-L-glutamyl-[protein] + ADP + phosphate + H(+). In terms of biological role, monoglutamylase which modifies both tubulin and non-tubulin proteins, adding a single glutamate on the gamma-carboxyl group of specific glutamate residues of target proteins. Involved in the side-chain initiation step of the polyglutamylation reaction but not in the elongation step. Preferentially modifies beta-tail tubulin over the alpha-tubulin. Monoglutamylates nucleosome assembly proteins NAP1L1 and NAP1L4. Monoglutamylates nucleotidyltransferase CGAS, leading to inhibition of CGAS catalytic activity, thereby preventing antiviral defense function. Involved in KLF4 glutamylation which impedes its ubiquitination, thereby leading to somatic cell reprogramming, pluripotency maintenance and embryogenesis. The polypeptide is Tubulin monoglutamylase TTLL4 (Mus musculus (Mouse)).